We begin with the raw amino-acid sequence, 397 residues long: Phosphoglycerate kinase (397 aa).

Substrate is bound by residues 25–27 (DLN), R41, 64–67 (HLGR), R118, and R151. ATP is bound by residues K202, E324, and 350–353 (GGDT).

It belongs to the phosphoglycerate kinase family. In terms of assembly, monomer.

It is found in the cytoplasm. The catalysed reaction is (2R)-3-phosphoglycerate + ATP = (2R)-3-phospho-glyceroyl phosphate + ADP. It participates in carbohydrate degradation; glycolysis; pyruvate from D-glyceraldehyde 3-phosphate: step 2/5. In Herminiimonas arsenicoxydans, this protein is Phosphoglycerate kinase.